Reading from the N-terminus, the 448-residue chain is Cysteine--tRNA ligase (448 aa).

C27 provides a ligand contact to Zn(2+). The short motif at P29–N39 is the 'HIGH' region element. The Zn(2+) site is built by C210, H235, and E239. Positions K267–S271 match the 'KMSKS' region motif. K270 lines the ATP pocket.

This sequence belongs to the class-I aminoacyl-tRNA synthetase family. In terms of assembly, monomer. It depends on Zn(2+) as a cofactor.

The protein resides in the cytoplasm. The catalysed reaction is tRNA(Cys) + L-cysteine + ATP = L-cysteinyl-tRNA(Cys) + AMP + diphosphate. This chain is Cysteine--tRNA ligase, found in Lactococcus lactis subsp. cremoris (strain SK11).